A 260-amino-acid polypeptide reads, in one-letter code: Carbonic anhydrase (260 aa).

Positions 1 to 31 (MAHAWGYGPADGPESWAESFPIANGPRQSPI) are disordered. The 257-residue stretch at 3–259 (HAWGYGPADG…LKGRKVRASF (257 aa)) folds into the Alpha-carbonic anhydrase domain. The Proton acceptor role is filled by His-64. His-94, His-96, and His-119 together coordinate Zn(2+). Tyr-127 is an active-site residue. Residue 198 to 199 (TT) coordinates substrate.

The protein belongs to the alpha-carbonic anhydrase family. Requires Zn(2+) as cofactor.

It carries out the reaction hydrogencarbonate + H(+) = CO2 + H2O. Its function is as follows. Reversible hydration of carbon dioxide. This is Carbonic anhydrase (cahz) from Danio rerio (Zebrafish).